The sequence spans 879 residues: Prostaglandin F2 receptor negative regulator (879 aa).

A signal peptide spans 1-25 (MGRLASRPLLLALLSLALCRGRVVR). Ig-like C2-type domains are found at residues 26 to 129 (VPTA…ATVQ) and 149 to 268 (PSAR…KAVE). Residues 26–832 (VPTATLVRVV…MDVLNAFKYP (807 aa)) lie on the Extracellular side of the membrane. 2 disulfide bridges follow: C43–C119 and C169–C247. N44 is a glycosylation site (N-linked (GlcNAc...) asparagine). Phosphothreonine is present on T271. Ig-like C2-type domains follow at residues 276 to 394 (PSVL…EAVS), 406 to 536 (PDYQ…DVFS), 544 to 662 (ALED…AWSP), and 688 to 813 (PIFN…AEIH). N286, N300, N383, and N413 each carry an N-linked (GlcNAc...) asparagine glycan. C299 and C373 are joined by a disulfide. An Endoplasmic reticulum retention signal motif is present at residues 424–427 (PTEL). The cysteines at positions 429 and 515 are disulfide-linked. 4 N-linked (GlcNAc...) asparagine glycosylation sites follow: N525, N600, N618, and N691. The cysteines at positions 571 and 655 are disulfide-linked. A Cell attachment site motif is present at residues 703 to 705 (RGD). C711 and C793 are oxidised to a cystine. The helical transmembrane segment at 833 to 853 (LLIGVGLSTVIGLLSCLIGYC) threads the bilayer. Residues 854–879 (SSHWCCKKEVQETRRERRRLMSMEMD) lie on the Cytoplasmic side of the membrane.

As to quaternary structure, interacts with CD9 and CD81. Part of a complex composed of CD9, CD81 and IGSF8. Also seems to interact with CD63, CD82 and CD151.

The protein localises to the endoplasmic reticulum membrane. Its subcellular location is the golgi apparatus. The protein resides in the trans-Golgi network membrane. Functionally, inhibits the binding of prostaglandin F2-alpha (PGF2-alpha) to its specific FP receptor, by decreasing the receptor number rather than the affinity constant. Functional coupling with the prostaglandin F2-alpha receptor seems to occur. In myoblasts, associates with tetraspanins CD9 and CD81 to prevent myotube fusion during muscle regeneration. The chain is Prostaglandin F2 receptor negative regulator (PTGFRN) from Homo sapiens (Human).